Consider the following 295-residue polypeptide: uncharacterized protein (295 aa).

The first 19 residues, M1–A19, serve as a signal peptide directing secretion. The tract at residues R275–K295 is disordered. The span at N276 to K295 shows a compositional bias: low complexity.

This is an uncharacterized protein from Rickettsia conorii (strain ATCC VR-613 / Malish 7).